The chain runs to 413 residues: Type IV pilus assembly protein TapC (413 aa).

Helical transmembrane passes span 180 to 200 (YPAM…LFVI), 227 to 247 (FMQH…FLYV), 286 to 306 (LSTT…AAGA), and 386 to 406 (IMVV…LPIF).

It belongs to the GSP F family.

The protein localises to the cell inner membrane. In terms of biological role, involved in the translocation of the type IV pilin. In Aeromonas hydrophila, this protein is Type IV pilus assembly protein TapC (tapC).